The chain runs to 445 residues: MAVAIAAARVWRLNRGLSQAALLLLRRPGARGLARSHPRRQQQQFSSLDDKPQFPGASAEFIDKLEFIQPNVISGIPIYRVMDRQGQIINPSEDPHLPKEKVLKLYKSMTLLNTMDRILYESQRQGRISFYMTNYGEEGTHVGSAAALDNTDLVFGQYREAGVLMYRDYPLELFMAQCYGNISDLGKGRQMPVHYGCKERHFVTISSPLATQIPQAVGAAYAAKRANANRVVICYFGEGAASEGDAHAGFNFAATLECPIIFFCRNNGYAISTPTSEQYRGDGIAARGPGYGIMSIRVDGNDVFAVYNATKEARRRAVAENQPFLIEAMTYRIGHHSTSDDSSAYRSVDEVNYWDKQDHPVSRLRHYLLSQGWWDEEQEKAWRKQSRKKVMEAFEQAERKPKPNPNLLFSDVYQEMPAQLRKQQESLARHLQTYGEHYPLDHFDK.

Residues 1-45 (MAVAIAAARVWRLNRGLSQAALLLLRRPGARGLARSHPRRQQQQF) constitute a mitochondrion transit peptide. A disordered region spans residues 33 to 54 (LARSHPRRQQQQFSSLDDKPQF). Thiamine diphosphate-binding residues include Tyr158 and Arg159. Ser206 contributes to the K(+) binding site. Ser207 lines the thiamine diphosphate pocket. Residues Pro208, Thr211, and Gln212 each contribute to the K(+) site. Position 238 (Glu238) interacts with Mg(2+). Residues Gly239, Ala240, and Arg265 each contribute to the thiamine diphosphate site. Mg(2+) is bound by residues Asn267 and Tyr269. Residue His336 participates in thiamine diphosphate binding. At Ser337 the chain carries Phosphoserine; by BCKDK. At Thr338 the chain carries Phosphothreonine. Ser339 and Ser347 each carry phosphoserine. Residue Lys356 is modified to N6-acetyllysine; alternate. Residue Lys356 is modified to N6-succinyllysine; alternate. At Lys380 the chain carries N6-succinyllysine.

The protein belongs to the BCKDHA family. As to quaternary structure, heterotetramer of 2 alpha/BCKDHA and 2 beta chains/BCKDHB that forms the branched-chain alpha-keto acid decarboxylase (E1) component of the BCKD complex. The branched-chain alpha-ketoacid dehydrogenase is a large complex composed of three major building blocks E1, E2 and E3. It is organized around E2, a 24-meric cubic core composed of DBT, to which are associated 6 to 12 copies of E1, and approximately 6 copies of the dehydrogenase E3, a DLD dimer. Interacts with PPM1K. The cofactor is thiamine diphosphate. It depends on Mg(2+) as a cofactor. Phosphorylated at Ser-337 by BCKDK and dephosphorylated by protein phosphatase PPM1K.

It is found in the mitochondrion matrix. The enzyme catalyses N(6)-[(R)-lipoyl]-L-lysyl-[protein] + 3-methyl-2-oxobutanoate + H(+) = N(6)-[(R)-S(8)-2-methylpropanoyldihydrolipoyl]-L-lysyl-[protein] + CO2. In terms of biological role, together with BCKDHB forms the heterotetrameric E1 subunit of the mitochondrial branched-chain alpha-ketoacid dehydrogenase (BCKD) complex. The BCKD complex catalyzes the multi-step oxidative decarboxylation of alpha-ketoacids derived from the branched-chain amino-acids valine, leucine and isoleucine producing CO2 and acyl-CoA which is subsequently utilized to produce energy. The E1 subunit catalyzes the first step with the decarboxylation of the alpha-ketoacid forming an enzyme-product intermediate. A reductive acylation mediated by the lipoylamide cofactor of E2 extracts the acyl group from the E1 active site for the next step of the reaction. The protein is 2-oxoisovalerate dehydrogenase subunit alpha, mitochondrial (BCKDHA) of Pan troglodytes (Chimpanzee).